Reading from the N-terminus, the 383-residue chain is S-adenosylmethionine synthase 1 (383 aa).

His-15 contributes to the ATP binding site. Asp-17 contributes to the Mg(2+) binding site. Residue Glu-43 participates in K(+) binding. 2 residues coordinate L-methionine: Glu-56 and Gln-99. Residues 99 to 109 (QSPDINLGVSR) form a flexible loop region. Residues 162 to 164 (DGK), 228 to 229 (RF), Asp-237, 243 to 244 (RK), Ala-260, and Lys-264 contribute to the ATP site. Asp-237 is a binding site for L-methionine. Residue Lys-268 participates in L-methionine binding.

This sequence belongs to the AdoMet synthase family. As to quaternary structure, homotetramer; dimer of dimers. The cofactor is Mg(2+). K(+) serves as cofactor.

It localises to the cytoplasm. The enzyme catalyses L-methionine + ATP + H2O = S-adenosyl-L-methionine + phosphate + diphosphate. The protein operates within amino-acid biosynthesis; S-adenosyl-L-methionine biosynthesis; S-adenosyl-L-methionine from L-methionine: step 1/1. Its function is as follows. Catalyzes the formation of S-adenosylmethionine (AdoMet) from methionine and ATP. The overall synthetic reaction is composed of two sequential steps, AdoMet formation and the subsequent tripolyphosphate hydrolysis which occurs prior to release of AdoMet from the enzyme. The sequence is that of S-adenosylmethionine synthase 1 from Rhodopseudomonas palustris (strain BisB18).